Reading from the N-terminus, the 519-residue chain is Putative cytochrome P450 CYP13A10 (519 aa).

The helical transmembrane segment at 3-23 threads the bilayer; sequence VILLAIPTLFIGFISYYLWIW. Residue Cys465 participates in heme binding.

This sequence belongs to the cytochrome P450 family. Heme is required as a cofactor.

Its subcellular location is the membrane. Its function is as follows. Cytochromes P450 are a group of heme-thiolate monooxygenases. They oxidize a variety of structurally unrelated compounds, including steroids, fatty acids, and xenobiotics. This Caenorhabditis elegans protein is Putative cytochrome P450 CYP13A10 (cyp-13A10).